The sequence spans 348 residues: Heat-inducible transcription repressor HrcA (348 aa).

This sequence belongs to the HrcA family.

Functionally, negative regulator of class I heat shock genes (grpE-dnaK-dnaJ and groELS operons). Prevents heat-shock induction of these operons. The polypeptide is Heat-inducible transcription repressor HrcA (Pelotomaculum thermopropionicum (strain DSM 13744 / JCM 10971 / SI)).